Here is a 383-residue protein sequence, read N- to C-terminus: MHLSKASFLFDCSRFILNFHERCLKNGVRTKKACVICRSKKQKCDGQLPCLYCKKYEYQCAYEGQATSTCNSEASLFNDANFKIGSDYRSKRIKVVSDTNNNKEDGDGKLSFTQCNPRMDIHHEAENFTAMVPYYEPKKFRFFYENSAIVFPRIYVFIYFEEVHPIFSMFDQKAMEKKIQFLWDNKSTDSCSEYVVISVKGKLVEHITQVLESSLSTTILSSIQLTVCWVLRTIYLHATTRPHLSWIASSVSMHYAEIVGLHQEITAEYGTRGIELTNITTQMVEEDGPAYQLVLLFKIIMEYQIISEDSRFVYLQAFQRLDQLCDIHSPALVLLKATVCFHLYRNLFLARIKPFCVIVSILFSVIDRALESCKQLVSQRKAW.

Positions 34-60 form a DNA-binding region, zn(2)-C6 fungal-type; the sequence is CVICRSKKQKCDGQLPCLYCKKYEYQC.

Its subcellular location is the nucleus. In terms of biological role, probable transcriptional repressor of multidrug resistance genes. This Schizosaccharomyces pombe (strain 972 / ATCC 24843) (Fission yeast) protein is Probable transcriptional repressor C1348.12.